The sequence spans 501 residues: Glycerol kinase (501 aa).

T11 lines the ADP pocket. Residues T11, T12, and S13 each coordinate ATP. T11 contributes to the sn-glycerol 3-phosphate binding site. R15 provides a ligand contact to ADP. The sn-glycerol 3-phosphate site is built by R81, E82, Y133, and D242. Glycerol is bound by residues R81, E82, Y133, D242, and Q243. Residues T264 and G307 each coordinate ADP. 4 residues coordinate ATP: T264, G307, Q311, and G409. The ADP site is built by G409 and N413.

Belongs to the FGGY kinase family.

The enzyme catalyses glycerol + ATP = sn-glycerol 3-phosphate + ADP + H(+). It participates in polyol metabolism; glycerol degradation via glycerol kinase pathway; sn-glycerol 3-phosphate from glycerol: step 1/1. Inhibited by fructose 1,6-bisphosphate (FBP). Functionally, key enzyme in the regulation of glycerol uptake and metabolism. Catalyzes the phosphorylation of glycerol to yield sn-glycerol 3-phosphate. The polypeptide is Glycerol kinase (Borrelia garinii subsp. bavariensis (strain ATCC BAA-2496 / DSM 23469 / PBi) (Borreliella bavariensis)).